Reading from the N-terminus, the 581-residue chain is MKASQFFISTLKEAPADAEVVSHKLMTRAGLIKKLGAGIYNYMPMGLRVIRKVEAIVREEMNRAGAVEVTMPVVQPAEMWEETGRFEKMGPELLRIKDRHGRDFVIQPTSEEVVTDIARQELKSYKQLPKNFYQIQTKFRDERRPRFGLMRGREFIMKDAYSFDKDRDTAQISYQTMRAAYKRIFDRFGLQYRAVRADSGAIGGDLSEEFQVIASTGEDAIVYCPSSDYAANIEKAEALAPAGPRPAAAQAMARVATPGNSTCESVAGQLGLPLSQTVKSLVLATDKLDDKGDVAGSQVWLLLLRGDHEMNEIKVAKVPGLDVGFRFATVAEIEEHFGCQPGYLGPIGLKKPVKLVVDREVAVMADWVCGANEADFHITGVNFGRDLPEPDVVADLRNVVAGDKSPDGAGELAIERGIEVGHVFYLGTKYSQAMNATFLAENGKPSLFEMGCYGIGVTRLPAAAIEQNHDERGIIWPDAIAPFTVVVCPIGMDRSEPVKEAAEKLHAELLALGVDVILDDRGERPGAMFADWELIGVPHRVVLSDRGLKEGQVEYQHRRDTEATKMAAADVLGHLKQRLGL.

The protein belongs to the class-II aminoacyl-tRNA synthetase family. ProS type 1 subfamily. In terms of assembly, homodimer.

Its subcellular location is the cytoplasm. It catalyses the reaction tRNA(Pro) + L-proline + ATP = L-prolyl-tRNA(Pro) + AMP + diphosphate. Catalyzes the attachment of proline to tRNA(Pro) in a two-step reaction: proline is first activated by ATP to form Pro-AMP and then transferred to the acceptor end of tRNA(Pro). As ProRS can inadvertently accommodate and process non-cognate amino acids such as alanine and cysteine, to avoid such errors it has two additional distinct editing activities against alanine. One activity is designated as 'pretransfer' editing and involves the tRNA(Pro)-independent hydrolysis of activated Ala-AMP. The other activity is designated 'posttransfer' editing and involves deacylation of mischarged Ala-tRNA(Pro). The misacylated Cys-tRNA(Pro) is not edited by ProRS. This Delftia acidovorans (strain DSM 14801 / SPH-1) protein is Proline--tRNA ligase.